The following is an 877-amino-acid chain: Alanine--tRNA ligase (877 aa).

Residues histidine 565, histidine 569, cysteine 667, and histidine 671 each coordinate Zn(2+).

It belongs to the class-II aminoacyl-tRNA synthetase family. The cofactor is Zn(2+).

It localises to the cytoplasm. The enzyme catalyses tRNA(Ala) + L-alanine + ATP = L-alanyl-tRNA(Ala) + AMP + diphosphate. Its function is as follows. Catalyzes the attachment of alanine to tRNA(Ala) in a two-step reaction: alanine is first activated by ATP to form Ala-AMP and then transferred to the acceptor end of tRNA(Ala). Also edits incorrectly charged Ser-tRNA(Ala) and Gly-tRNA(Ala) via its editing domain. The chain is Alanine--tRNA ligase from Chromobacterium violaceum (strain ATCC 12472 / DSM 30191 / JCM 1249 / CCUG 213 / NBRC 12614 / NCIMB 9131 / NCTC 9757 / MK).